Here is a 554-residue protein sequence, read N- to C-terminus: 3-(3-hydroxy-phenyl)propionate/3-hydroxycinnamic acid hydroxylase (554 aa).

FAD contacts are provided by residues 17-46 (QVAIAGAGPVGLMMANYLGQMGIDVLVVEK) and 285-295 (FRIDRVLLAGD).

It belongs to the PheA/TfdB FAD monooxygenase family. The cofactor is FAD.

The catalysed reaction is 3-(3-hydroxyphenyl)propanoate + NADH + O2 + H(+) = 3-(2,3-dihydroxyphenyl)propanoate + NAD(+) + H2O. It catalyses the reaction (2E)-3-(3-hydroxyphenyl)prop-2-enoate + NADH + O2 + H(+) = (2E)-3-(2,3-dihydroxyphenyl)prop-2-enoate + NAD(+) + H2O. It functions in the pathway aromatic compound metabolism; 3-phenylpropanoate degradation. In terms of biological role, catalyzes the insertion of one atom of molecular oxygen into position 2 of the phenyl ring of 3-(3-hydroxyphenyl)propionate (3-HPP) and hydroxycinnamic acid (3HCI). The sequence is that of 3-(3-hydroxy-phenyl)propionate/3-hydroxycinnamic acid hydroxylase from Escherichia coli O8 (strain IAI1).